The chain runs to 201 residues: Ribonuclease HII (201 aa).

Residues 12 to 201 (DLVAGVDEVG…VRELLDVSVQ (190 aa)) enclose the RNase H type-2 domain. Residues aspartate 18, glutamate 19, and aspartate 110 each contribute to the a divalent metal cation site.

It belongs to the RNase HII family. The cofactor is Mn(2+). It depends on Mg(2+) as a cofactor.

The protein resides in the cytoplasm. The enzyme catalyses Endonucleolytic cleavage to 5'-phosphomonoester.. In terms of biological role, endonuclease that specifically degrades the RNA of RNA-DNA hybrids. This Pseudomonas aeruginosa (strain ATCC 15692 / DSM 22644 / CIP 104116 / JCM 14847 / LMG 12228 / 1C / PRS 101 / PAO1) protein is Ribonuclease HII.